An 82-amino-acid polypeptide reads, in one-letter code: ATP synthase subunit c (82 aa).

2 helical membrane-spanning segments follow: residues 5 to 25 and 55 to 75; these read MSLVAGLIAIGAGIAVGFGAI and FLIIALAFMETLTIYGLVIAF.

It belongs to the ATPase C chain family. As to quaternary structure, F-type ATPases have 2 components, F(1) - the catalytic core - and F(0) - the membrane proton channel. F(1) has five subunits: alpha(3), beta(3), gamma(1), delta(1), epsilon(1). F(0) has three main subunits: a(1), b(2) and c(10-14). The alpha and beta chains form an alternating ring which encloses part of the gamma chain. F(1) is attached to F(0) by a central stalk formed by the gamma and epsilon chains, while a peripheral stalk is formed by the delta and b chains.

Its subcellular location is the cell membrane. Its function is as follows. F(1)F(0) ATP synthase produces ATP from ADP in the presence of a proton or sodium gradient. F-type ATPases consist of two structural domains, F(1) containing the extramembraneous catalytic core and F(0) containing the membrane proton channel, linked together by a central stalk and a peripheral stalk. During catalysis, ATP synthesis in the catalytic domain of F(1) is coupled via a rotary mechanism of the central stalk subunits to proton translocation. In terms of biological role, key component of the F(0) channel; it plays a direct role in translocation across the membrane. A homomeric c-ring of between 10-14 subunits forms the central stalk rotor element with the F(1) delta and epsilon subunits. The sequence is that of ATP synthase subunit c from Carboxydothermus hydrogenoformans (strain ATCC BAA-161 / DSM 6008 / Z-2901).